Here is a 131-residue protein sequence, read N- to C-terminus: MSMQDTVADMLTRVRNAQMAKKQTVSMPSSKLKVAIANVLQQEGYISNVEVAQEEAKATLTLTLKYFEGKPVIETVKRVSRPGLRQYRGKDKIPSVKQGLGIAIVSTSKGIMTDRAARAAGIGGEVIAFVS.

The protein belongs to the universal ribosomal protein uS8 family. In terms of assembly, part of the 30S ribosomal subunit. Contacts proteins S5 and S12.

Functionally, one of the primary rRNA binding proteins, it binds directly to 16S rRNA central domain where it helps coordinate assembly of the platform of the 30S subunit. The chain is Small ribosomal subunit protein uS8 from Acinetobacter baylyi (strain ATCC 33305 / BD413 / ADP1).